The sequence spans 98 residues: NADH-ubiquinone oxidoreductase chain 4L (98 aa).

The next 3 membrane-spanning stretches (helical) occupy residues 1 to 21 (MSMV…GLLM), 29 to 49 (SLLC…LTIL), and 61 to 81 (IILL…LVMV).

The protein belongs to the complex I subunit 4L family. In terms of assembly, core subunit of respiratory chain NADH dehydrogenase (Complex I) which is composed of 45 different subunits.

Its subcellular location is the mitochondrion inner membrane. The catalysed reaction is a ubiquinone + NADH + 5 H(+)(in) = a ubiquinol + NAD(+) + 4 H(+)(out). In terms of biological role, core subunit of the mitochondrial membrane respiratory chain NADH dehydrogenase (Complex I) which catalyzes electron transfer from NADH through the respiratory chain, using ubiquinone as an electron acceptor. Part of the enzyme membrane arm which is embedded in the lipid bilayer and involved in proton translocation. The chain is NADH-ubiquinone oxidoreductase chain 4L (MT-ND4L) from Bos mutus grunniens (Wild yak).